Consider the following 292-residue polypeptide: G1/S-specific cyclin-D3 (292 aa).

In terms of domain architecture, Cyclin N-terminal spans 27–152; sequence VLQSLLRLEE…LVLGKLKWDL (126 aa). The disordered stretch occupies residues 256–292; the sequence is REAAQTAPSPVPKAPRGSSSQGPSQTSTPTDVTAIHL. Ser-264 and Ser-279 each carry phosphoserine. Low complexity predominate over residues 272–285; that stretch reads GSSSQGPSQTSTPT. Thr-283 is subject to Phosphothreonine.

Belongs to the cyclin family. Cyclin D subfamily. In terms of assembly, interacts with the CDK4 and CDK6 protein kinases to form a serine/threonine kinase holoenzyme complex. The cyclin subunit imparts substrate specificity to the complex. Interacts with ATF5. Interacts with EIF3K. Component of the ternary complex cyclin D/CDK4/CDKN1B required for nuclear translocation and modulation of CDK4-mediated kinase activity. Can form similar complexes with either CDKN1A or CDKN2A. Post-translationally, phosphorylation at Thr-283 by MAP kinases is required for ubiquitination and degradation by the DCX(AMBRA1) complex. Ubiquitinated by the DCX(AMBRA1) complex during the transition from G1 to S cell phase, leading to its degradation: ubiquitination is dependent on Thr-283 phosphorylation. The DCX(AMBRA1) complex represents the major regulator of CCND3 stability during the G1/S transition. Polyubiquitinated by the SCF(FBXL2) complex, leading to proteasomal degradation.

The protein localises to the nucleus. It localises to the cytoplasm. Functionally, regulatory component of the cyclin D3-CDK4 (DC) complex that phosphorylates and inhibits members of the retinoblastoma (RB) protein family including RB1 and regulates the cell-cycle during G(1)/S transition. Phosphorylation of RB1 allows dissociation of the transcription factor E2F from the RB/E2F complex and the subsequent transcription of E2F target genes which are responsible for the progression through the G(1) phase. Hypophosphorylates RB1 in early G(1) phase. Cyclin D-CDK4 complexes are major integrators of various mitogenenic and antimitogenic signals. Component of the ternary complex, cyclin D3/CDK4/CDKN1B, required for nuclear translocation and activity of the cyclin D-CDK4 complex. Shows transcriptional coactivator activity with ATF5 independently of CDK4. This chain is G1/S-specific cyclin-D3, found in Mus musculus (Mouse).